Consider the following 479-residue polypeptide: ATP-dependent RNA helicase DbpA (479 aa).

The Q motif signature appears at 2–30 (SHFKNYQISHDILRALEGLGYTEPTKVQQ). One can recognise a Helicase ATP-binding domain in the interval 33-203 (IPAALERKDL…RQYMQNPEHI (171 aa)). 46 to 53 (SQTGSGKT) lines the ATP pocket. The DEAD box motif lies at 151–154 (DEAD). Residues 214 to 374 (NIEHAVIQVR…KIEAPSQEEV (161 aa)) enclose the Helicase C-terminal domain. An involved in 23S rRNA binding region spans residues 404–479 (MKLYFNGGKK…KQLKVNKANK (76 aa)).

It belongs to the DEAD box helicase family. DbpA subfamily. In terms of assembly, may interact with RNA helicases CshA and CshB.

Its subcellular location is the cytoplasm. The catalysed reaction is ATP + H2O = ADP + phosphate + H(+). With respect to regulation, ATPase activity is stimulated by interaction with RNA. In terms of biological role, DEAD-box RNA helicase involved in the assembly of the 50S ribosomal subunit. Has an RNA-dependent ATPase activity, which is specific for 23S rRNA, and a 3' to 5' RNA helicase activity that uses the energy of ATP hydrolysis to destabilize and unwind short rRNA duplexes. The protein is ATP-dependent RNA helicase DbpA of Bacillus subtilis (strain 168).